The sequence spans 103 residues: Alpha-ketoglutarate dehydrogenase component 4 (103 aa).

Methionine 1 carries the post-translational modification N-acetylmethionine. Lysine 5 is modified (N6-succinyllysine). The segment at 20–69 (TPLIRFPDRRDNPKPNVSEALRSAGLPSHSSVISQHSKGSKSPDLLMYQG) is disordered. Residues 47–56 (SHSSVISQHS) are compositionally biased toward polar residues. Serine 49, serine 61, and serine 90 each carry phosphoserine.

Belongs to the alpha-ketoglutarate dehydrogenase component 4 family. As to quaternary structure, component of the 2-oxoglutarate dehydrogenase complex (OGDHC), composed of OGDH (2-oxoglutarate dehydrogenase; also called E1 subunit), DLST (dihydrolipoamide succinyltransferase; also called E2 subunit) and DLD (dihydrolipoamide dehydrogenase; also called E3 subunit), and the assembly factor KGD4. Within OGDHC complex, interacts (via N-terminus) with E3 subunit and (via C-terminus) with E2 subunit.

The protein resides in the mitochondrion. Molecular adapter that is necessary to form a stable 2-oxoglutarate dehydrogenase enzyme complex (OGDHC). Enables the specific recruitment of E3 subunit to E2 subunit in the 2-oxoglutarate dehydrogenase complex (OGDHC). The chain is Alpha-ketoglutarate dehydrogenase component 4 from Homo sapiens (Human).